Reading from the N-terminus, the 413-residue chain is Glucose-1-phosphate adenylyltransferase (413 aa).

Residues Tyr-102, Gly-167, Glu-182–Lys-183, and Ser-200 contribute to the alpha-D-glucose 1-phosphate site.

The protein belongs to the bacterial/plant glucose-1-phosphate adenylyltransferase family. As to quaternary structure, homotetramer.

The enzyme catalyses alpha-D-glucose 1-phosphate + ATP + H(+) = ADP-alpha-D-glucose + diphosphate. The protein operates within glycan biosynthesis; glycogen biosynthesis. In terms of biological role, involved in the biosynthesis of ADP-glucose, a building block required for the elongation reactions to produce glycogen. Catalyzes the reaction between ATP and alpha-D-glucose 1-phosphate (G1P) to produce pyrophosphate and ADP-Glc. In Deinococcus radiodurans (strain ATCC 13939 / DSM 20539 / JCM 16871 / CCUG 27074 / LMG 4051 / NBRC 15346 / NCIMB 9279 / VKM B-1422 / R1), this protein is Glucose-1-phosphate adenylyltransferase.